A 339-amino-acid polypeptide reads, in one-letter code: Probable long-chain-alcohol O-fatty-acyltransferase 7 (339 aa).

A run of 7 helical transmembrane segments spans residues 7-27 (SLINVGFLTIISVSYCYCLPP), 39-59 (IFPVCVLLVVLPLFFSFSIFT), 113-133 (HLSTYVFPVKIAIFVVLLYVH), 143-163 (FLLCLHPLYVYLLLEILLTLL), 226-246 (MLIGVFATFVTSGVAHEVVFF), 254-274 (TGEVALFFLLHGVCTVAEVAA), and 287-307 (PVVSWMFTIAFVNVTAGWLFF).

Belongs to the wax synthase family.

Its subcellular location is the membrane. The catalysed reaction is a long chain fatty alcohol + a fatty acyl-CoA = a wax ester + CoA. In terms of biological role, catalyzes the final step in the synthesis of long-chain linear esters (waxes). The protein is Probable long-chain-alcohol O-fatty-acyltransferase 7 (AT7) of Arabidopsis thaliana (Mouse-ear cress).